The following is a 406-amino-acid chain: Nuclear hormone receptor family member nhr-133 (406 aa).

The nuclear receptor DNA-binding region spans 8-83 (SGPCEICEQP…VGMNSSKFQN (76 aa)). The NR C4-type zinc finger occupies 11 to 31 (CEICEQPAHGNHFGVLSCRAC). An NR C4-type; degenerate zinc finger spans residues 47 to 66 (DRVCRKGNCIGNDLYRCKIC). In terms of domain architecture, NR LBD spans 150 to 406 (YSWSPNHYPN…YSHPEMFEFS (257 aa)).

This sequence belongs to the nuclear hormone receptor family.

Its subcellular location is the nucleus. In terms of biological role, orphan nuclear receptor. The chain is Nuclear hormone receptor family member nhr-133 from Caenorhabditis elegans.